The chain runs to 501 residues: Cytochrome P450 4d2 (501 aa).

Heme-binding residues include E311 and C449.

It belongs to the cytochrome P450 family. Heme is required as a cofactor.

It is found in the endoplasmic reticulum membrane. The protein resides in the microsome membrane. Functionally, involved in the metabolism of insect hormones and in the breakdown of synthetic insecticides. The protein is Cytochrome P450 4d2 (Cyp4d2) of Drosophila melanogaster (Fruit fly).